Here is an 842-residue protein sequence, read N- to C-terminus: MGFKVETNGGDGSLVSAKVPPLANPLAEKPDEIASNISYHAQYTPHFSPFKFQLQQAYYATAESVRDRLIQQWNETYLHFHKVDPKQTYYLSMEFLQGRALTNAIGNLNIQDAYADALRKFGLELEEITEQEKDAALGNGGLGRLASCFLDSMATLNLPAWGYGLRYRYGLFKQIITKEGQEEVAEDWLEKFSPWEIVRHDVLYPIRFFGQVEVNPDGSRQWIGGEVIQALAYDVPIPGYQTKNTISLRLWEAKACADDFDLFLFNDGQLESASVLHSRAQQICSVLYPGDATEGGKLLRLKQQYFLCSASLQDIISRFKERRQGPWNWSEFPTKVAVQLNDTHPTLSIPELMRLLMDDEGLGWDEAWAVTSKTVAYTNHTVLPEALEKWSQPVMWKLLPRHMEIIEEIDRRFVALISKTRLDLEDEVSNMRILDNNLQKPVVRMANLCVVSSHTVNGVAQLHSDILKSELFASYVSIWPTKFQNKTNGITPRRWINFCSPELSRIITKWLKTDKWVTNLDLLTGLREFADNEDLQAEWLSAKRANKQRLAQYVLQVTGENIDPDSLFDIQVKRIHEYKRQLLNILGVIYRYKKLKEMSPEERKSTTARTVMIGGKAFATYTNAKRIVKLVDDVGSVVNSDPEVNSYLKVVFVPNYNVSVAEVLIPGSELSQHISTAGMEASGTSNMKFALNRVLIIGTLDGANVEIREEIGEENFFLFGATADEVPRLRKERENGLFKPDPRFEEAKKFIRSGVFGSYDYNPLLDSLEGNSGYGRGDYFLVGYDFPSYMDAQEKVDEAYRDKKRWLKMSILSTAGSGKFSSDRTIAQYAKEIWNIEECRVP.

An N6-(pyridoxal phosphate)lysine modification is found at lysine 688.

It belongs to the glycogen phosphorylase family. Requires pyridoxal 5'-phosphate as cofactor.

Its subcellular location is the cytoplasm. It catalyses the reaction [(1-&gt;4)-alpha-D-glucosyl](n) + phosphate = [(1-&gt;4)-alpha-D-glucosyl](n-1) + alpha-D-glucose 1-phosphate. Phosphorylase is an important allosteric enzyme in carbohydrate metabolism. Enzymes from different sources differ in their regulatory mechanisms and in their natural substrates. However, all known phosphorylases share catalytic and structural properties. In terms of biological role, the H isoform exhibits higher affinity for branched polyglucans such as soluble starch or glycogen. This is Alpha-glucan phosphorylase, H isozyme from Vicia faba (Broad bean).